Reading from the N-terminus, the 947-residue chain is DNA topoisomerase 1 (947 aa).

In terms of domain architecture, Toprim spans 16–140 (RRLVIVESPT…VKRMVFHEIT (125 aa)). Mg(2+)-binding residues include glutamate 22 and aspartate 109. In terms of domain architecture, Topo IA-type catalytic spans 155–614 (DIDLVDAQET…FYFGGNHGVS (460 aa)). The interaction with DNA stretch occupies residues 189-194 (SAGRVQ). Tyrosine 343 serves as the catalytic O-(5'-phospho-DNA)-tyrosine intermediate. Disordered regions lie at residues 733–771 (VLPK…GSLL), 846–888 (KRAG…GETN), and 910–947 (ADRR…QSPR). Over residues 915-934 (RGPVKRPAKKARKVPAKKAA) the composition is skewed to basic residues.

Belongs to the type IA topoisomerase family. In terms of assembly, monomer. Requires Mg(2+) as cofactor.

It carries out the reaction ATP-independent breakage of single-stranded DNA, followed by passage and rejoining.. Releases the supercoiling and torsional tension of DNA, which is introduced during the DNA replication and transcription, by transiently cleaving and rejoining one strand of the DNA duplex. Introduces a single-strand break via transesterification at a target site in duplex DNA. The scissile phosphodiester is attacked by the catalytic tyrosine of the enzyme, resulting in the formation of a DNA-(5'-phosphotyrosyl)-enzyme intermediate and the expulsion of a 3'-OH DNA strand. The free DNA strand then undergoes passage around the unbroken strand, thus removing DNA supercoils. Finally, in the religation step, the DNA 3'-OH attacks the covalent intermediate to expel the active-site tyrosine and restore the DNA phosphodiester backbone. This chain is DNA topoisomerase 1, found in Mycobacterium leprae (strain TN).